Here is a 159-residue protein sequence, read N- to C-terminus: Protein-export protein SecB (159 aa).

The protein belongs to the SecB family. In terms of assembly, homotetramer, a dimer of dimers. One homotetramer interacts with 1 SecA dimer.

It is found in the cytoplasm. In terms of biological role, one of the proteins required for the normal export of preproteins out of the cell cytoplasm. It is a molecular chaperone that binds to a subset of precursor proteins, maintaining them in a translocation-competent state. It also specifically binds to its receptor SecA. In Rhizobium etli (strain CIAT 652), this protein is Protein-export protein SecB.